The chain runs to 579 residues: Capsid vertex component 2 (579 aa).

The segment at 1–50 (MTARYGFGSISFPNKCGIFLSTTKNFIAPNFPIHYWTAPAFELRGRMNPD) is interaction with major capsid protein/MCP.

It belongs to the herpesviridae CVC2 protein family. Heterodimerizes with CVC1. Interacts with major capsid protein/MCP and triplex capsid protein 1/TRX1 at the pentamer vertices. Interacts with the large tegument protein/LTP.

The protein resides in the virion. It localises to the host nucleus. Capsid vertex-specific component that plays a role during viral DNA encapsidation, assuring correct genome cleavage and presumably stabilizing capsids that contain full-length viral genomes. Participates in the interaction between the capsid and the tegument through interaction with the large tegument protein/LTP. The sequence is that of Capsid vertex component 2 from Homo sapiens (Human).